The following is a 329-amino-acid chain: 3-dehydroquinate synthase (329 aa).

Belongs to the archaeal-type DHQ synthase family.

The enzyme catalyses 2-amino-2,3,7-trideoxy-D-lyxo-hept-6-ulosonate + NAD(+) + H2O = 3-dehydroquinate + NH4(+) + NADH + H(+). Its function is as follows. Catalyzes the oxidative deamination and cyclization of 2-amino-3,7-dideoxy-D-threo-hept-6-ulosonic acid (ADH) to yield 3-dehydroquinate (DHQ), which is fed into the canonical shikimic pathway of aromatic amino acid biosynthesis. The sequence is that of 3-dehydroquinate synthase from Methanoregula boonei (strain DSM 21154 / JCM 14090 / 6A8).